A 95-amino-acid chain; its full sequence is Co-chaperonin GroES (95 aa).

The protein belongs to the GroES chaperonin family. As to quaternary structure, heptamer of 7 subunits arranged in a ring. Interacts with the chaperonin GroEL.

It localises to the cytoplasm. In terms of biological role, together with the chaperonin GroEL, plays an essential role in assisting protein folding. The GroEL-GroES system forms a nano-cage that allows encapsulation of the non-native substrate proteins and provides a physical environment optimized to promote and accelerate protein folding. GroES binds to the apical surface of the GroEL ring, thereby capping the opening of the GroEL channel. The chain is Co-chaperonin GroES from Nitratidesulfovibrio vulgaris (strain DSM 19637 / Miyazaki F) (Desulfovibrio vulgaris).